We begin with the raw amino-acid sequence, 551 residues long: Enhancer of mRNA-decapping protein 3 (551 aa).

Residues 1–63 enclose the Sm domain; the sequence is MSQFVGFGVQ…LKDLKVLTVA (63 aa). Positions 64-92 are disordered; that stretch reads SQSGKRKQQRQQQQQNDYNQNRGEHIDWQ. The DFDF domain maps to 93–129; the sequence is DDDVSKIKQQEDFDFQRNLGMFNKKDVFAQLKQNDDI. Phosphoserine is present on residues Ser-257 and Ser-261. Residues 288 to 527 enclose the YjeF N-terminal domain; the sequence is VQLLEMESIT…DIGIPQGAYS (240 aa).

It belongs to the EDC3 family. As to quaternary structure, homodimer. Interacts with DCP2.

It is found in the cytoplasm. Its subcellular location is the P-body. Its function is as follows. Stimulates decapping of both stable and unstable mRNA during mRNA decay. Does not affect nonsense-mediated mRNA decay. Required for normal P-body assembly. In Saccharomyces cerevisiae (strain ATCC 204508 / S288c) (Baker's yeast), this protein is Enhancer of mRNA-decapping protein 3 (EDC3).